We begin with the raw amino-acid sequence, 137 residues long: MLSNPKRTRFRKQHRGRMKGKSFRGNRICFGRYALQALEPAWITARQIEAGRRAITRYARRGGKIWVRIFPDKPVTLRPTETRMGSGKGSPEYWVAVVKPGRILYEMGGVSETVARAAISIAASKMPIRSQFIRLEI.

It belongs to the universal ribosomal protein uL16 family. As to quaternary structure, part of the 50S ribosomal subunit.

The protein localises to the plastid. It localises to the chloroplast. The protein is Large ribosomal subunit protein uL16c of Hordeum vulgare (Barley).